A 722-amino-acid polypeptide reads, in one-letter code: Glycine--tRNA ligase beta subunit (722 aa).

Belongs to the class-II aminoacyl-tRNA synthetase family. As to quaternary structure, tetramer of two alpha and two beta subunits.

It localises to the cytoplasm. The enzyme catalyses tRNA(Gly) + glycine + ATP = glycyl-tRNA(Gly) + AMP + diphosphate. In Synechocystis sp. (strain ATCC 27184 / PCC 6803 / Kazusa), this protein is Glycine--tRNA ligase beta subunit (glyS).